The chain runs to 312 residues: tRNA dimethylallyltransferase (312 aa).

10–17 (GPTGVGKT) contributes to the ATP binding site. Residue 12–17 (TGVGKT) participates in substrate binding.

It belongs to the IPP transferase family. As to quaternary structure, monomer. Mg(2+) serves as cofactor.

It catalyses the reaction adenosine(37) in tRNA + dimethylallyl diphosphate = N(6)-dimethylallyladenosine(37) in tRNA + diphosphate. Its function is as follows. Catalyzes the transfer of a dimethylallyl group onto the adenine at position 37 in tRNAs that read codons beginning with uridine, leading to the formation of N6-(dimethylallyl)adenosine (i(6)A). This chain is tRNA dimethylallyltransferase, found in Coprothermobacter proteolyticus (strain ATCC 35245 / DSM 5265 / OCM 4 / BT).